The primary structure comprises 492 residues: Acyl-CoA-binding domain-containing protein 5 (492 aa).

One can recognise an ACB domain in the interval 8-97 (HATRFEAAVK…MKKILESMPM (90 aa)). An acyl-CoA-binding positions include 19 to 28 (IQSLPKNGSF), 39 to 43 (YSFYK), Lys-65, and Tyr-84. Disordered regions lie at residues 141-162 (AVNGKAESSDSGAESEEEGLRE) and 335-399 (VKCG…DRGP). Residues 153–162 (AESEEEGLRE) are compositionally biased toward acidic residues. The span at 335-360 (VKCGGEDGKASNGAPHKEKKDGEKAD) shows a compositional bias: basic and acidic residues. Over residues 378 to 388 (GSQGGQMGNGG) the composition is skewed to gly residues. Positions 389–399 (DGERWGSDRGP) are enriched in basic and acidic residues. A coiled-coil region spans residues 405 to 431 (EQIAVVLMRLQEDMQNVLQRLHMLEAV). Residues 464–484 (GVLAFAIVWPFIAQWLVHVYL) traverse the membrane as a helical segment.

It belongs to the ATG37 family.

The protein localises to the peroxisome membrane. Acyl-CoA binding protein which acts as the peroxisome receptor for pexophagy but is dispensable for aggrephagy and nonselective autophagy. Binds medium- and long-chain acyl-CoA esters. The polypeptide is Acyl-CoA-binding domain-containing protein 5 (ACBD5) (Gallus gallus (Chicken)).